The primary structure comprises 424 residues: Endoglucanase 1 (424 aa).

The N-terminal stretch at 1–18 (MAKFSALCSLALLGLATA) is a signal peptide. 9 disulfide bridges follow: cysteine 35–cysteine 41, cysteine 68–cysteine 90, cysteine 80–cysteine 86, cysteine 156–cysteine 384, cysteine 188–cysteine 211, cysteine 192–cysteine 210, cysteine 231–cysteine 250, cysteine 239–cysteine 244, and cysteine 255–cysteine 331. An N-linked (GlcNAc...) asparagine glycan is attached at asparagine 76. Glutamate 213 (nucleophile) is an active-site residue. The active-site Proton donor is the glutamate 218. N-linked (GlcNAc...) asparagine glycans are attached at residues asparagine 271 and asparagine 385.

The protein belongs to the glycosyl hydrolase 7 (cellulase C) family. Monomer.

The protein localises to the secreted. It carries out the reaction Endohydrolysis of (1-&gt;4)-beta-D-glucosidic linkages in cellulose, lichenin and cereal beta-D-glucans.. Endoglucanase that is involved in the biological conversion of cellulose to glucose. Hydrolyzes internal beta-1,4-glucosidic bonds. In Pyricularia oryzae (strain 70-15 / ATCC MYA-4617 / FGSC 8958) (Rice blast fungus), this protein is Endoglucanase 1.